The following is a 194-amino-acid chain: tRNA(Phe) 7-((3-amino-3-carboxypropyl)-4-demethylwyosine(37)-N(4))-methyltransferase 1 (194 aa).

Belongs to the TYW3 family.

The catalysed reaction is 4-demethyl-7-[(3S)-3-amino-3-carboxypropyl]wyosine(37) in tRNA(Phe) + S-adenosyl-L-methionine = 7-[(3S)-3-amino-3-carboxypropyl]wyosine(37) in tRNA(Phe) + S-adenosyl-L-homocysteine + H(+). Functionally, S-adenosyl-L-methionine-dependent methyltransferase that acts as a component of the wyosine derivatives biosynthesis pathway. Probably methylates N-4 position of wybutosine-86 to produce wybutosine-72. This is tRNA(Phe) 7-((3-amino-3-carboxypropyl)-4-demethylwyosine(37)-N(4))-methyltransferase 1 from Pyrococcus abyssi (strain GE5 / Orsay).